Reading from the N-terminus, the 103-residue chain is Large ribosomal subunit protein bL21 (103 aa).

This sequence belongs to the bacterial ribosomal protein bL21 family. As to quaternary structure, part of the 50S ribosomal subunit. Contacts protein L20.

In terms of biological role, this protein binds to 23S rRNA in the presence of protein L20. The protein is Large ribosomal subunit protein bL21 of Wigglesworthia glossinidia brevipalpis.